The sequence spans 260 residues: Ribosomal RNA small subunit methyltransferase J (260 aa).

Residues 101–102 (RD), 117–118 (ER), 153–154 (SS), and Asp-176 contribute to the S-adenosyl-L-methionine site.

The protein belongs to the methyltransferase superfamily. RsmJ family.

Its subcellular location is the cytoplasm. It catalyses the reaction guanosine(1516) in 16S rRNA + S-adenosyl-L-methionine = N(2)-methylguanosine(1516) in 16S rRNA + S-adenosyl-L-homocysteine + H(+). In terms of biological role, specifically methylates the guanosine in position 1516 of 16S rRNA. The polypeptide is Ribosomal RNA small subunit methyltransferase J (Aliivibrio salmonicida (strain LFI1238) (Vibrio salmonicida (strain LFI1238))).